The following is a 460-amino-acid chain: Light-independent protochlorophyllide reductase subunit N (460 aa).

The [4Fe-4S] cluster site is built by Cys20, Cys45, and Cys105.

This sequence belongs to the BchN/ChlN family. Protochlorophyllide reductase is composed of three subunits; ChlL, ChlN and ChlB. Forms a heterotetramer of two ChlB and two ChlN subunits. The cofactor is [4Fe-4S] cluster.

Its subcellular location is the plastid. It localises to the chloroplast. It catalyses the reaction chlorophyllide a + oxidized 2[4Fe-4S]-[ferredoxin] + 2 ADP + 2 phosphate = protochlorophyllide a + reduced 2[4Fe-4S]-[ferredoxin] + 2 ATP + 2 H2O. It participates in porphyrin-containing compound metabolism; chlorophyll biosynthesis (light-independent). Component of the dark-operative protochlorophyllide reductase (DPOR) that uses Mg-ATP and reduced ferredoxin to reduce ring D of protochlorophyllide (Pchlide) to form chlorophyllide a (Chlide). This reaction is light-independent. The NB-protein (ChlN-ChlB) is the catalytic component of the complex. The chain is Light-independent protochlorophyllide reductase subunit N from Adiantum capillus-veneris (Maidenhair fern).